Here is a 220-residue protein sequence, read N- to C-terminus: Ripening-related protein grip22 (220 aa).

A signal peptide spans 1–27 (MAKSALVWLASVCLVFNILSLPFLALG).

Belongs to the kiwellin family. As to expression, expressed in ripening fruits.

The protein localises to the secreted. This is Ripening-related protein grip22 (grip22) from Vitis vinifera (Grape).